The sequence spans 58 residues: Ribulose bisphosphate carboxylase large chain (58 aa).

Residues 1–2 (MS) constitute a propeptide that is removed on maturation. Proline 3 is subject to N-acetylproline. Position 14 is an N6,N6,N6-trimethyllysine (lysine 14).

The protein belongs to the RuBisCO large chain family. Type I subfamily. As to quaternary structure, heterohexadecamer of 8 large chains and 8 small chains.

It is found in the plastid. The protein localises to the chloroplast. It carries out the reaction 2 (2R)-3-phosphoglycerate + 2 H(+) = D-ribulose 1,5-bisphosphate + CO2 + H2O. It catalyses the reaction D-ribulose 1,5-bisphosphate + O2 = 2-phosphoglycolate + (2R)-3-phosphoglycerate + 2 H(+). Its function is as follows. RuBisCO catalyzes two reactions: the carboxylation of D-ribulose 1,5-bisphosphate, the primary event in carbon dioxide fixation, as well as the oxidative fragmentation of the pentose substrate in the photorespiration process. Both reactions occur simultaneously and in competition at the same active site. In Rosa damascena (Damask rose), this protein is Ribulose bisphosphate carboxylase large chain (rbcL).